The following is a 403-amino-acid chain: MSTSTSPAAMLLRRLRRLSWGSTAVQLFILTVVTFGLLAPLACHRLLHSYFYLRHWHLNQMSQEFLQQSLKEGEAALHYFEELPSANGSVPIVWQATPRPWLVITIITVDRQPGFHYVLQVVSQFHRLLQQCGPQCEGHQLFLCNVERSVSHFDAKLLSKYVPVANRYEGTEDDYGDDPSTNSFEKEKQDYVYCLESSLQTYNPDYVLMVEDDAVPEEQIFPVLEHLLRARFSEPHLRDALYLKLYHPERLQHYINPEPMRILEWVGVGMLLGPLLTWIYMRFASRPGFSWPVMLFFSLYSMGLVELVGRHYFLELRRLSPSLYSVVPASQCCTPAMLFPAPAARRTLTYLSQVYCHKGFGKDMALYSLLRAKGERAYVVEPNLVKHIGLFSSLRYNFHPSLL.

Over 1 to 22 (MSTSTSPAAMLLRRLRRLSWGS) the chain is Cytoplasmic. The helical transmembrane segment at 23–43 (TAVQLFILTVVTFGLLAPLAC) threads the bilayer. At 44 to 259 (HRLLHSYFYL…RLQHYINPEP (216 aa)) the chain is on the lumenal side. N-linked (GalNAc...) asparagine glycosylation occurs at asparagine 87. Valine 109 contributes to the UDP-N-acetyl-alpha-D-galactosamine binding site. 2 disulfides stabilise this stretch: cysteine 132/cysteine 136 and cysteine 144/cysteine 194. A DXD motif motif is present at residues 211–213 (EDD). Residues 260–280 (MRILEWVGVGMLLGPLLTWIY) traverse the membrane as a helical segment. The Cytoplasmic portion of the chain corresponds to 281–287 (MRFASRP). The chain crosses the membrane as a helical span at residues 288 to 308 (GFSWPVMLFFSLYSMGLVELV). Over 309–403 (GRHYFLELRR…LRYNFHPSLL (95 aa)) the chain is Lumenal. Cysteines 332 and 333 form a disulfide. Residues threonine 334, proline 335, and lysine 362 each coordinate UDP-N-acetyl-alpha-D-galactosamine.

This sequence belongs to the PGAP4 family. In terms of processing, glycosylated.

The protein localises to the golgi apparatus membrane. In terms of biological role, golgi-resident glycosylphosphatidylinositol (GPI)-N-acetylgalactosamine transferase that catalyzes the N-acetyl-beta-D-galactosamine transfer from an UDP-N-acetyl-alpha-D-galactosamine to the 4-OH-position of the first mannose of the glycosylphosphatidylinositol (GPI) of a GPI-anchored protein (GPI-AP). This modification occurs after the fatty acid remodeling step of the GPI-anchor maturation. The chain is GPI-N-acetylgalactosamine transferase PGAP4 from Homo sapiens (Human).